Here is a 282-residue protein sequence, read N- to C-terminus: Cell division protein DivIB (282 aa).

At methionine 1–arginine 59 the chain is on the cytoplasmic side. Positions glutamate 19 to valine 41 are disordered. Positions glutamine 31–valine 41 are enriched in basic residues. A helical membrane pass occupies residues valine 60–proline 80. At leucine 81–lysine 282 the chain is on the extracellular side. The POTRA domain maps to serine 82–asparagine 153.

It belongs to the FtsQ/DivIB family. DivIB subfamily.

Its subcellular location is the cell membrane. Functionally, cell division protein that may be involved in stabilizing or promoting the assembly of the division complex. The polypeptide is Cell division protein DivIB (Limosilactobacillus reuteri (strain ATCC 55730 / SD2112) (Lactobacillus reuteri)).